Here is a 249-residue protein sequence, read N- to C-terminus: Secreted flagellin C (249 aa).

In terms of assembly, interacts with FliS.

It is found in the secreted. Its function is as follows. Might play a role in virulence. This chain is Secreted flagellin C (flaC), found in Campylobacter jejuni subsp. jejuni serotype O:6 (strain 81116 / NCTC 11828).